Here is a 286-residue protein sequence, read N- to C-terminus: Interferon-induced 35 kDa protein (286 aa).

The segment at 5 to 26 (LDAALHALQEEQARLKMRLWDL) is leucine-zipper. 2 NID domains span residues 81–170 (ALIT…GDVD) and 183–266 (FARD…GEVE).

It belongs to the NMI family. In terms of assembly, homodimer. Also interacts with BATF. Interacts with TRIM21. Interacts with NMI; the interaction is direct and is facilitated by TRIM21. Phosphorylated. Dephosphorylation correlates with the formation of a complex with NMI. In terms of tissue distribution, expressed in a wide range of cell types, including fibroblasts, macrophages, and epithelial cells.

It is found in the cytoplasm. Its subcellular location is the nucleus. It localises to the secreted. Acts as a signaling pathway regulator involved in innate immune system response. In response to interferon IFN-alpha, associates in a complex with signaling pathway regulator NMI to regulate immune response; the complex formation prevents proteasome-mediated degradation of IFI35 and correlates with IFI35 dephosphorylation. In complex with NMI, inhibits virus-triggered type I interferon/IFN-beta production. In complex with NMI, negatively regulates nuclear factor NF-kappa-B signaling by inhibiting the nuclear translocation, activation and transcription of the NF-kappa-B subunit p65/RELA, resulting in the inhibition of endothelial cell proliferation, migration and re-endothelialization of injured arteries. Beside its role as an intracellular signaling pathway regulator, also functions extracellularly as damage-associated molecular patterns (DAMPs) to promote inflammation when actively released by macrophage to the extracellular space during cell injury and pathogen invasion. Macrophage-secreted IFI35 activates NF-kappa-B signaling in adjacent macrophages through Toll-like receptor 4/TLR4 activation, thereby inducing NF-kappa-B translocation from the cytoplasm into the nucleus which promotes the release of pro-inflammatory cytokines. The chain is Interferon-induced 35 kDa protein from Homo sapiens (Human).